Here is a 101-residue protein sequence, read N- to C-terminus: Small ribosomal subunit protein bS18c (101 aa).

This sequence belongs to the bacterial ribosomal protein bS18 family. Part of the 30S ribosomal subunit.

The protein localises to the plastid. It is found in the chloroplast. The chain is Small ribosomal subunit protein bS18c from Guizotia abyssinica (Niger).